The primary structure comprises 338 residues: Phenylalanine--tRNA ligase alpha subunit (338 aa).

Glu252 provides a ligand contact to Mg(2+).

Belongs to the class-II aminoacyl-tRNA synthetase family. Phe-tRNA synthetase alpha subunit type 1 subfamily. As to quaternary structure, tetramer of two alpha and two beta subunits. Mg(2+) is required as a cofactor.

It is found in the cytoplasm. It carries out the reaction tRNA(Phe) + L-phenylalanine + ATP = L-phenylalanyl-tRNA(Phe) + AMP + diphosphate + H(+). This is Phenylalanine--tRNA ligase alpha subunit from Ectopseudomonas mendocina (strain ymp) (Pseudomonas mendocina).